Reading from the N-terminus, the 389-residue chain is 8-amino-7-oxononanoate synthase (389 aa).

Arg23 is a substrate binding site. Position 114–115 (Gly114–Tyr115) interacts with pyridoxal 5'-phosphate. A substrate-binding site is contributed by His139. 3 residues coordinate pyridoxal 5'-phosphate: Ser185, His213, and Thr242. Position 245 is an N6-(pyridoxal phosphate)lysine (Lys245). Thr357 serves as a coordination point for substrate.

It belongs to the class-II pyridoxal-phosphate-dependent aminotransferase family. BioF subfamily. In terms of assembly, homodimer. The cofactor is pyridoxal 5'-phosphate.

The catalysed reaction is 6-carboxyhexanoyl-[ACP] + L-alanine + H(+) = (8S)-8-amino-7-oxononanoate + holo-[ACP] + CO2. The protein operates within cofactor biosynthesis; biotin biosynthesis. In terms of biological role, catalyzes the decarboxylative condensation of pimeloyl-[acyl-carrier protein] and L-alanine to produce 8-amino-7-oxononanoate (AON), [acyl-carrier protein], and carbon dioxide. In Acidithiobacillus ferrooxidans (strain ATCC 23270 / DSM 14882 / CIP 104768 / NCIMB 8455) (Ferrobacillus ferrooxidans (strain ATCC 23270)), this protein is 8-amino-7-oxononanoate synthase.